The sequence spans 893 residues: ATPase family gene 2 protein homolog A (893 aa).

A compositionally biased stretch (basic residues) spans 1 to 10; sequence MSSKKNRKRL. Residues 1-26 are disordered; that stretch reads MSSKKNRKRLNQSAENGSSLPSAASS. Residues 1 to 237 form a required for interaction with AFG2B and CINP region; that stretch reads MSSKKNRKRL…SLELSLQLSQ (237 aa). A compositionally biased stretch (polar residues) spans 11–25; sequence NQSAENGSSLPSAAS. T272 bears the Phosphothreonine mark. Residues S274 and S279 each carry the phosphoserine modification. ATP-binding positions include 394 to 401 and 668 to 675; these read GPPGTGKT and GPPGCSKT. A Glycyl lysine isopeptide (Lys-Gly) (interchain with G-Cter in SUMO2) cross-link involves residue K859.

Belongs to the AAA ATPase family. AFG2 subfamily. Part of the 55LCC heterohexameric ATPase complex composed at least of AIRIM, AFG2A, AFG2B and CINP. Associates with pre-60S ribosomal particles.

The protein resides in the cytoplasm. It is found in the mitochondrion. Its subcellular location is the cytoskeleton. It localises to the spindle. It catalyses the reaction ATP + H2O = ADP + phosphate + H(+). AFG2A alone display limited ATPase activity and is not regulated by RNA or DNA binding. In the context of 55LCC heterohexameric ATPase complex, the ATPase activity increases and is stimulated by DNA binding and inhibited in presence of RNA. Its function is as follows. ATP-dependent chaperone part of the 55LCC heterohexameric ATPase complex which is chromatin-associated and promotes replisome proteostasis to maintain replication fork progression and genome stability. Required for replication fork progression, sister chromatid cohesion, and chromosome stability. The ATPase activity is specifically enhanced by replication fork DNA and is coupled to cysteine protease-dependent cleavage of replisome substrates in response to replication fork damage. Uses ATPase activity to process replisome substrates in S-phase, facilitating their proteolytic turnover from chromatin to ensure DNA replication and mitotic fidelity. Plays an essential role in the cytoplasmic maturation steps of pre-60S ribosomal particles by promoting the release of shuttling protein RSL24D1/RLP24 from the pre-ribosomal particles. May be involved in morphological and functional mitochondrial transformations during spermatogenesis. This Homo sapiens (Human) protein is ATPase family gene 2 protein homolog A.